Reading from the N-terminus, the 55-residue chain is Large ribosomal subunit protein bL33 (55 aa).

The protein belongs to the bacterial ribosomal protein bL33 family.

In Vibrio atlanticus (strain LGP32) (Vibrio splendidus (strain Mel32)), this protein is Large ribosomal subunit protein bL33.